A 256-amino-acid polypeptide reads, in one-letter code: Trypsin, alkaline A (256 aa).

The signal sequence occupies residues 1 to 17; the sequence is MRLFLALLALGFAAVAA. Positions 18–24 are cleaved as a propeptide — activation peptide; the sequence is VPAYPQR. The Peptidase S1 domain maps to 25-256; that stretch reads IVGGSTTTIQ…RFANWIRNNS (232 aa). Cysteine 55 and cysteine 71 form a disulfide bridge. Catalysis depends on charge relay system residues histidine 70 and aspartate 115. 2 disulfides stabilise this stretch: cysteine 180–cysteine 197 and cysteine 209–cysteine 233. Serine 213 acts as the Charge relay system in catalysis.

Belongs to the peptidase S1 family. Midgut.

The protein resides in the secreted. It localises to the extracellular space. The catalysed reaction is Preferential cleavage: Arg-|-Xaa, Lys-|-Xaa.. In Manduca sexta (Tobacco hawkmoth), this protein is Trypsin, alkaline A.